Reading from the N-terminus, the 526-residue chain is Phosphoenolpyruvate carboxykinase (ATP) 2 (526 aa).

Residues Arg55, Tyr190, and Lys196 each contribute to the substrate site. Residues Lys196, His215, and 231–239 (GLSGTGKTT) contribute to the ATP site. 2 residues coordinate Mn(2+): Lys196 and His215. Mn(2+) is bound at residue Asp252. Positions 280, 317, and 442 each coordinate ATP. Residue Arg317 coordinates substrate.

It belongs to the phosphoenolpyruvate carboxykinase (ATP) family. It depends on Mn(2+) as a cofactor.

The protein localises to the cytoplasm. It carries out the reaction oxaloacetate + ATP = phosphoenolpyruvate + ADP + CO2. The protein operates within carbohydrate biosynthesis; gluconeogenesis. Functionally, involved in the gluconeogenesis. Catalyzes the conversion of oxaloacetate (OAA) to phosphoenolpyruvate (PEP) through direct phosphoryl transfer between the nucleoside triphosphate and OAA. The chain is Phosphoenolpyruvate carboxykinase (ATP) 2 from Moorella thermoacetica (strain ATCC 39073 / JCM 9320).